The following is a 43-amino-acid chain: Delta-actitoxin-Bca1a (43 aa).

3 disulfides stabilise this stretch: C1–C41, C3–C31, and C24–C42.

It localises to the secreted. Its subcellular location is the nematocyst. Binds specifically to voltage-gated sodium channels (Nav), thereby delaying their inactivation during signal transduction. Thus it strongly stimulates mammalian cardiac muscle contraction. The protein is Delta-actitoxin-Bca1a of Bunodosoma capense (Knobbly sea anemone).